The sequence spans 101 residues: Large ribosomal subunit protein bL21 (101 aa).

Belongs to the bacterial ribosomal protein bL21 family. Part of the 50S ribosomal subunit. Contacts protein L20.

This protein binds to 23S rRNA in the presence of protein L20. This chain is Large ribosomal subunit protein bL21, found in Anaeromyxobacter dehalogenans (strain 2CP-1 / ATCC BAA-258).